We begin with the raw amino-acid sequence, 500 residues long: MSEKLDFITKNNLWTDKQRDAADKVLAEIDSLGLEMIRLSWADQYGLLRGKALSVAALKAAFSEGSEVTMAPFSFNLVSEWVFNPFTAGGGFGIDEFDELGGVPSVVMVPDPTTFKVLPWADKTGWMLADLHWKSGEPFPLCPRGIMKKAVKSLSDEGYLFKCGIELEWYLTKIVDRSLSPESLGAPGVQPDAIQVQPVAQGYSYLLEYHLDQVDDIMSKVRKGLLELNLPLRSIEDELAPSQMETTFDVMEGLEAADAALLIKSAIKQICSRHGYHATFMCKPAINGFSVASGWHMHQSLVDKDTRKNLFIPSEGEVVSPLGRAYAGGLLANGSAASSFTTPTVNGYRRRQPHSLAPDRRAWAKENKAAMVRVISATGDPASRIENRIGEPGANPYLYMASQIVSGLDGIKIKRDPGGLQGAPYGAQVPMLPTALAEALDALEHDSELFRSCFGDTFIKYWLQLRRSEWARFLDAEGAEAAEPTGAVTQWEQKEYFNLL.

The region spanning leucine 32–glycine 136 is the GS beta-grasp domain. The GS catalytic domain maps to proline 143 to leucine 500.

It belongs to the glutamine synthetase family. As to quaternary structure, homohexamer.

The catalysed reaction is aniline + L-glutamate + ATP = N(5)-phenyl-L-glutamine + ADP + phosphate. Involved in the initial oxidation of aniline to catechol by the release of its amino group. Catalyzes the ATP-dependent ligation of L-glutamate to aniline to yield gamma-glutamylanilide (gamma-GA). AtdA1 has a broad substrate range and is able to convert the following anilines, including chlorinated and methylated forms of aniline: aniline (100%), o-chloroaniline (92%), m-chloroaniline (69%), p-chloroaniline (92%), o-methylaniline (40%), m-methylaniline (27%) and p-methylaniline (45%). This Acinetobacter sp protein is Gamma-glutamylanilide synthase.